Reading from the N-terminus, the 634-residue chain is Threonine--tRNA ligase (634 aa).

The 61-residue stretch at 1 to 61 (MINIRFPDGS…NSNCELRLIT (61 aa)) folds into the TGS domain. The tract at residues 241 to 532 (DHRKIGKVLD…LIEHYAGNLP (292 aa)) is catalytic. 3 residues coordinate Zn(2+): cysteine 332, histidine 383, and histidine 509.

It belongs to the class-II aminoacyl-tRNA synthetase family. Homodimer. Requires Zn(2+) as cofactor.

It localises to the cytoplasm. The enzyme catalyses tRNA(Thr) + L-threonine + ATP = L-threonyl-tRNA(Thr) + AMP + diphosphate + H(+). Functionally, catalyzes the attachment of threonine to tRNA(Thr) in a two-step reaction: L-threonine is first activated by ATP to form Thr-AMP and then transferred to the acceptor end of tRNA(Thr). Also edits incorrectly charged L-seryl-tRNA(Thr). This is Threonine--tRNA ligase from Francisella tularensis subsp. mediasiatica (strain FSC147).